A 108-amino-acid chain; its full sequence is UPF0145 protein Ava_0420 (108 aa).

It belongs to the UPF0145 family.

The sequence is that of UPF0145 protein Ava_0420 from Trichormus variabilis (strain ATCC 29413 / PCC 7937) (Anabaena variabilis).